The following is a 362-amino-acid chain: Peptide chain release factor 1 (362 aa).

Glutamine 237 bears the N5-methylglutamine mark. Residues 285–295 show a composition bias toward basic and acidic residues; sequence EEKRHAEEAST. Positions 285-311 are disordered; that stretch reads EEKRHAEEASTRRNLLGSGDRSDRIRT.

It belongs to the prokaryotic/mitochondrial release factor family. In terms of processing, methylated by PrmC. Methylation increases the termination efficiency of RF1.

It localises to the cytoplasm. In terms of biological role, peptide chain release factor 1 directs the termination of translation in response to the peptide chain termination codons UAG and UAA. In Photobacterium profundum (strain SS9), this protein is Peptide chain release factor 1.